Reading from the N-terminus, the 314-residue chain is Ribosomal protein L11 methyltransferase (314 aa).

S-adenosyl-L-methionine contacts are provided by T166, G187, D209, and N251.

Belongs to the methyltransferase superfamily. PrmA family.

It localises to the cytoplasm. The catalysed reaction is L-lysyl-[protein] + 3 S-adenosyl-L-methionine = N(6),N(6),N(6)-trimethyl-L-lysyl-[protein] + 3 S-adenosyl-L-homocysteine + 3 H(+). Functionally, methylates ribosomal protein L11. This Clostridium tetani (strain Massachusetts / E88) protein is Ribosomal protein L11 methyltransferase.